Consider the following 161-residue polypeptide: Fatty acid-binding protein homolog 2 (161 aa).

A signal peptide spans 1–19; that stretch reads MSSKFLILLAFCGATLVAA.

This sequence belongs to the calycin superfamily. Fatty-acid binding protein (FABP) family.

It localises to the secreted. Functionally, may play a role in sequestering potentially toxic fatty acids and their peroxidation products, or it may be involved in the maintenance of the impermeable lipid layer of the eggshell. The protein is Fatty acid-binding protein homolog 2 (lbp-2) of Caenorhabditis elegans.